Consider the following 90-residue polypeptide: Small ribosomal subunit protein bS20 (90 aa).

This sequence belongs to the bacterial ribosomal protein bS20 family.

Its function is as follows. Binds directly to 16S ribosomal RNA. This is Small ribosomal subunit protein bS20 from Nautilia profundicola (strain ATCC BAA-1463 / DSM 18972 / AmH).